The sequence spans 313 residues: Intelectin-1 (313 aa).

The first 18 residues, M1–S18, serve as a signal peptide directing secretion. The region spanning S32–R255 is the Fibrinogen C-terminal domain. C41 and C70 form a disulfide bridge. H86, E87, D89, G92, G97, D98, and D133 together coordinate Ca(2+). Intrachain disulfides connect C94–C280, C199–C259, and C251–C265. N163 is a glycosylation site (N-linked (GlcNAc...) asparagine). Residues N260, E262, E274, and D282 each coordinate Ca(2+). Residues E262–H263 and E274 each bind a carbohydrate. A lipid anchor (GPI-anchor amidated serine) is attached at S298. The propeptide occupies S299–R313.

In terms of assembly, homotrimer; disulfide-linked. May interact with LTF. In terms of processing, N-glycosylated. As to expression, highly expressed in omental adipose tissue where it is found in stromal vascular cells but not in fat cells but is barely detectable in subcutaneous adipose tissue (at protein level). Highly expressed in the small intestine. Also found in the heart, testis, colon, salivary gland, skeletal muscle, pancreas and thyroid and, to a lesser degree, in the uterus, spleen, prostate, lymph node and thymus.

The protein resides in the cell membrane. It is found in the secreted. Lectin that specifically recognizes microbial carbohydrate chains in a calcium-dependent manner. Binds to microbial glycans that contain a terminal acyclic 1,2-diol moiety, including beta-linked D-galactofuranose (beta-Galf), D-phosphoglycerol-modified glycans, D-glycero-D-talo-oct-2-ulosonic acid (KO) and 3-deoxy-D-manno-oct-2-ulosonic acid (KDO). Binds to glycans from Gram-positive and Gram-negative bacteria, including K.pneumoniae, S.pneumoniae, Y.pestis, P.mirabilis and P.vulgaris. Does not bind human glycans. Probably plays a role in the defense system against microorganisms. May function as adipokine that has no effect on basal glucose uptake but enhances insulin-stimulated glucose uptake in adipocytes. Increases AKT phosphorylation in the absence and presence of insulin. May interact with lactoferrin/LTF and increase its uptake, and may thereby play a role in iron absorption. This Homo sapiens (Human) protein is Intelectin-1 (ITLN1).